Reading from the N-terminus, the 429-residue chain is Ribosomal RNA small subunit methyltransferase B (429 aa).

S-adenosyl-L-methionine is bound by residues Cys254–Lys260, Asp277, Asp303, and Asp322. The active-site Nucleophile is Cys375.

This sequence belongs to the class I-like SAM-binding methyltransferase superfamily. RsmB/NOP family.

The protein localises to the cytoplasm. The enzyme catalyses cytidine(967) in 16S rRNA + S-adenosyl-L-methionine = 5-methylcytidine(967) in 16S rRNA + S-adenosyl-L-homocysteine + H(+). Its function is as follows. Specifically methylates the cytosine at position 967 (m5C967) of 16S rRNA. The chain is Ribosomal RNA small subunit methyltransferase B from Escherichia coli O6:K15:H31 (strain 536 / UPEC).